The primary structure comprises 173 residues: Trafficking regulator of GLUT4 1 (173 aa).

Residues 1 to 17 show a composition bias toward polar residues; that stretch reads MANPVQPQLQDPGSTSP. The segment at 1–22 is disordered; it reads MANPVQPQLQDPGSTSPLDLPE. Residues 1 to 102 lie on the Cytoplasmic side of the membrane; the sequence is MANPVQPQLQ…QDQEAPKDYL (102 aa). Serine 16, serine 43, serine 45, serine 70, serine 84, and serine 85 each carry phosphoserine. An intramembrane region (helical) is located at residues 103–123; sequence VLAIASCFCPVWPLNLIPLIF. The Cytoplasmic portion of the chain corresponds to 124–150; that stretch reads SIMSRSSVQQGDLDGARRLGRLARLLS. The chain crosses the membrane as a helical span at residues 151–171; the sequence is ITFIILGIVIIIVAVTVNFTV. Over 172–173 the chain is Extracellular; sequence PK.

The protein belongs to the CD225/Dispanin family. In terms of assembly, interacts with SLC2A4; the interaction is required for proper SLC2A4 reacycling after insulin stimulation. In terms of tissue distribution, present in adipose tissue and undetectable in other tissues (at protein level).

The protein localises to the cell membrane. Its subcellular location is the endomembrane system. The protein resides in the cytoplasm. It is found in the perinuclear region. Its function is as follows. Regulates insulin-mediated adipose tissue glucose uptake and transport by modulation of SLC2A4 recycling. Not required for SLC2A4 membrane fusion upon an initial stimulus, but rather is necessary for proper protein recycling during prolonged insulin stimulation. The polypeptide is Trafficking regulator of GLUT4 1 (Rattus norvegicus (Rat)).